We begin with the raw amino-acid sequence, 230 residues long: Orotidine 5'-phosphate decarboxylase (230 aa).

Substrate is bound by residues D11, K34, 61–70, T117, R179, Q188, G208, and R209; that span reads DLKLHDIPNT. The Proton donor role is filled by K63.

It belongs to the OMP decarboxylase family. Type 1 subfamily. Homodimer.

It carries out the reaction orotidine 5'-phosphate + H(+) = UMP + CO2. Its pathway is pyrimidine metabolism; UMP biosynthesis via de novo pathway; UMP from orotate: step 2/2. Functionally, catalyzes the decarboxylation of orotidine 5'-monophosphate (OMP) to uridine 5'-monophosphate (UMP). This is Orotidine 5'-phosphate decarboxylase from Streptococcus pyogenes serotype M49 (strain NZ131).